Reading from the N-terminus, the 529-residue chain is Peptide chain release factor 3 (529 aa).

One can recognise a tr-type G domain in the interval 11–280 (AKRRTFAIIS…GLVEWAPAPM (270 aa)). GTP is bound by residues 20 to 27 (SHPDAGKT), 88 to 92 (DTPGH), and 142 to 145 (NKLD).

This sequence belongs to the TRAFAC class translation factor GTPase superfamily. Classic translation factor GTPase family. PrfC subfamily.

The protein localises to the cytoplasm. In terms of biological role, increases the formation of ribosomal termination complexes and stimulates activities of RF-1 and RF-2. It binds guanine nucleotides and has strong preference for UGA stop codons. It may interact directly with the ribosome. The stimulation of RF-1 and RF-2 is significantly reduced by GTP and GDP, but not by GMP. This chain is Peptide chain release factor 3, found in Yersinia pestis bv. Antiqua (strain Antiqua).